Here is a 285-residue protein sequence, read N- to C-terminus: Bifunctional protein FolD (285 aa).

NADP(+)-binding positions include 165–167 and Ser190; that span reads GRS.

Belongs to the tetrahydrofolate dehydrogenase/cyclohydrolase family. Homodimer.

The catalysed reaction is (6R)-5,10-methylene-5,6,7,8-tetrahydrofolate + NADP(+) = (6R)-5,10-methenyltetrahydrofolate + NADPH. It catalyses the reaction (6R)-5,10-methenyltetrahydrofolate + H2O = (6R)-10-formyltetrahydrofolate + H(+). Its pathway is one-carbon metabolism; tetrahydrofolate interconversion. Functionally, catalyzes the oxidation of 5,10-methylenetetrahydrofolate to 5,10-methenyltetrahydrofolate and then the hydrolysis of 5,10-methenyltetrahydrofolate to 10-formyltetrahydrofolate. In Burkholderia pseudomallei (strain 1106a), this protein is Bifunctional protein FolD.